The following is an 852-amino-acid chain: Disks large homolog 2 (852 aa).

Residues Cys-5 and Cys-7 are each lipidated (S-palmitoyl cysteine). Ser-28 bears the Phosphoserine mark. Tyr-58 is subject to Phosphotyrosine. Ser-65 bears the Phosphoserine mark. PDZ domains are found at residues 98–184 (EITL…VRRR) and 193–279 (EIKL…VGKP). Phosphoserine is present on residues Ser-307, Ser-328, Ser-360, Ser-365, Ser-406, and Ser-414. The region spanning 421 to 501 (KVVLHKGSTG…QTVTIIAQYQ (81 aa)) is the PDZ 3 domain. Tyr-505 is subject to Phosphotyrosine. 3 positions are modified to phosphoserine: Ser-528, Ser-530, and Ser-553. Residues 536 to 606 (KRSLYVRAMF…PSKRRVERKE (71 aa)) enclose the SH3 domain. Positions 662-837 (TRPVIILGPM…IYNQCKLVIE (176 aa)) constitute a Guanylate kinase-like domain. 2 positions are modified to phosphotyrosine: Tyr-732 and Tyr-737.

This sequence belongs to the MAGUK family. In terms of assembly, interacts through its PDZ domains with NETO1. Interacts with NOS1/nNOS through second PDZ domain. Interacts with KCNJ2/Kir2.1 (via C-terminus) through one of its PDZ domains. Interacts with KCNJ4. Interacts with FRMPD4 (via C-terminus). Interacts with LRFN1. Interacts with LRFN2 and LRFN4. Interacts with FASLG. Interacts with ADAM22. Interacts with DGKI (via PDZ-binding motif). Post-translationally, palmitoylation of isoform 1 and isoform 2 is not required for targeting to postsynaptic density. In terms of tissue distribution, detected in juxtaparanodal zones in the central nervous system and at nerve terminal plexuses of basket cells in the cerebellum (at protein level). Brain. High levels in cerebellar Purkinje cells. Expressed in pyramidal cells of the Ammons's horn and granular cells of the dentate gyrus in the hippocampus as well as cerebral cortex and striatum. High levels in dorsal horn of spinal cord.

The protein resides in the cell membrane. The protein localises to the postsynaptic density. It localises to the synapse. It is found in the cell projection. Its subcellular location is the axon. The protein resides in the membrane. The protein localises to the perikaryon. Required for perception of chronic pain through NMDA receptor signaling. Regulates surface expression of NMDA receptors in dorsal horn neurons of the spinal cord. Interacts with the cytoplasmic tail of NMDA receptor subunits as well as inward rectifying potassium channels. Involved in regulation of synaptic stability at cholinergic synapses. Part of the postsynaptic protein scaffold of excitatory synapses. This Rattus norvegicus (Rat) protein is Disks large homolog 2 (Dlg2).